Here is a 239-residue protein sequence, read N- to C-terminus: 7-cyano-7-deazaguanine synthase (239 aa).

Residue 13–23 participates in ATP binding; it reads LSGGQDSATCL. Positions 199, 214, 217, and 220 each coordinate Zn(2+).

Belongs to the QueC family. It depends on Zn(2+) as a cofactor.

The enzyme catalyses 7-carboxy-7-deazaguanine + NH4(+) + ATP = 7-cyano-7-deazaguanine + ADP + phosphate + H2O + H(+). The protein operates within purine metabolism; 7-cyano-7-deazaguanine biosynthesis. Catalyzes the ATP-dependent conversion of 7-carboxy-7-deazaguanine (CDG) to 7-cyano-7-deazaguanine (preQ(0)). This Acidovorax ebreus (strain TPSY) (Diaphorobacter sp. (strain TPSY)) protein is 7-cyano-7-deazaguanine synthase.